A 428-amino-acid chain; its full sequence is Enolase (428 aa).

Gln164 lines the (2R)-2-phosphoglycerate pocket. The active-site Proton donor is Glu208. Mg(2+) is bound by residues Asp245, Glu286, and Asp313. Lys338, Arg367, Ser368, and Lys389 together coordinate (2R)-2-phosphoglycerate. Lys338 serves as the catalytic Proton acceptor.

Belongs to the enolase family. Requires Mg(2+) as cofactor.

It localises to the cytoplasm. It is found in the secreted. Its subcellular location is the cell surface. The catalysed reaction is (2R)-2-phosphoglycerate = phosphoenolpyruvate + H2O. Its pathway is carbohydrate degradation; glycolysis; pyruvate from D-glyceraldehyde 3-phosphate: step 4/5. Functionally, catalyzes the reversible conversion of 2-phosphoglycerate (2-PG) into phosphoenolpyruvate (PEP). It is essential for the degradation of carbohydrates via glycolysis. This Pyrococcus horikoshii (strain ATCC 700860 / DSM 12428 / JCM 9974 / NBRC 100139 / OT-3) protein is Enolase.